Here is a 187-residue protein sequence, read N- to C-terminus: Cytochrome b-245 chaperone 1 (187 aa).

Residues 20-42 form a helical membrane-spanning segment; sequence GIRSWSLLVGILSIGLAAAYYSG. At Ser168 the chain carries Phosphoserine.

The protein belongs to the CYBC1 family. As to quaternary structure, interacts with CYBB; CYBC1 may act as a chaperone stabilizing Cytochrome b-245 heterodimer. As to expression, highly expressed in macrophages, neutrophils and monocytes.

Its subcellular location is the endoplasmic reticulum membrane. Its function is as follows. Functions as a chaperone necessary for a stable expression of the CYBA and CYBB subunits of the cytochrome b-245 heterodimer. Controls the phagocyte respiratory burst and is essential for innate immunity. This is Cytochrome b-245 chaperone 1 from Homo sapiens (Human).